We begin with the raw amino-acid sequence, 246 residues long: Orotidine 5'-phosphate decarboxylase (246 aa).

Residues D22, K44, 71–80 (DLKYHDIPHT), T130, R191, Q201, G221, and R222 contribute to the substrate site. K73 serves as the catalytic Proton donor.

The protein belongs to the OMP decarboxylase family. Type 1 subfamily. As to quaternary structure, homodimer.

The catalysed reaction is orotidine 5'-phosphate + H(+) = UMP + CO2. It functions in the pathway pyrimidine metabolism; UMP biosynthesis via de novo pathway; UMP from orotate: step 2/2. Its function is as follows. Catalyzes the decarboxylation of orotidine 5'-monophosphate (OMP) to uridine 5'-monophosphate (UMP). This chain is Orotidine 5'-phosphate decarboxylase, found in Neisseria meningitidis serogroup B (strain ATCC BAA-335 / MC58).